Reading from the N-terminus, the 285-residue chain is Nucleotide-binding protein Gmet_1286 (285 aa).

8–15 (GLSGSGKS) is a binding site for ATP. 59–62 (DIRG) provides a ligand contact to GTP.

This sequence belongs to the RapZ-like family.

Displays ATPase and GTPase activities. In Geobacter metallireducens (strain ATCC 53774 / DSM 7210 / GS-15), this protein is Nucleotide-binding protein Gmet_1286.